The sequence spans 320 residues: o-succinylbenzoate synthase (320 aa).

Lysine 133 (proton donor) is an active-site residue. Mg(2+)-binding residues include aspartate 161, glutamate 190, and aspartate 213. Residue lysine 235 is the Proton acceptor of the active site.

This sequence belongs to the mandelate racemase/muconate lactonizing enzyme family. MenC type 1 subfamily. It depends on a divalent metal cation as a cofactor.

The catalysed reaction is (1R,6R)-6-hydroxy-2-succinyl-cyclohexa-2,4-diene-1-carboxylate = 2-succinylbenzoate + H2O. It functions in the pathway quinol/quinone metabolism; 1,4-dihydroxy-2-naphthoate biosynthesis; 1,4-dihydroxy-2-naphthoate from chorismate: step 4/7. It participates in quinol/quinone metabolism; menaquinone biosynthesis. In terms of biological role, converts 2-succinyl-6-hydroxy-2,4-cyclohexadiene-1-carboxylate (SHCHC) to 2-succinylbenzoate (OSB). The polypeptide is o-succinylbenzoate synthase (Escherichia coli O17:K52:H18 (strain UMN026 / ExPEC)).